The sequence spans 576 residues: Outer capsid protein VP4 (576 aa).

Its subcellular location is the virion. In Banna virus (BAV), this protein is Outer capsid protein VP4 (Segment-4).